The sequence spans 46 residues: Spectrin alpha chain, non-erythrocytic 1 (46 aa).

6 Spectrin repeats span residues 1-5 (AQLAD), 7-14 (FHLQQFFR), 15-20 (SQLLGS), 21-26 (AHEVQR), 27-35 (LAQFVEHWK), and 39-46 (DLFLTFAK).

Belongs to the spectrin family. Associates with the gamma-tubulin complex in brain, but not in kidney, liver, sperm, or uterus. Like erythrocyte spectrin, the spectrin-like proteins are capable of forming dimers which can further associate to tetramers. Interacts with isoform 1 of ACP1. Interacts with CALM and EMD. Interacts (via C-terminal spectrin repeats) with TRPC4. Identified in a complex with ACTN4, CASK, IQGAP1, MAGI2, NPHS1 and SPTBN1. Interacts with CLN3; this interaction regulates the fodrin localization at the plasma membrane.

It is found in the cytoplasm. The protein localises to the cytoskeleton. It localises to the cell cortex. Functionally, fodrin, which seems to be involved in secretion, interacts with calmodulin in a calcium-dependent manner and is thus candidate for the calcium-dependent movement of the cytoskeleton at the membrane. This is Spectrin alpha chain, non-erythrocytic 1 (SPTAN1) from Capra hircus (Goat).